Consider the following 324-residue polypeptide: tRNA-dihydrouridine(20a/20b) synthase [NAD(P)+]-like (324 aa).

FMN-binding positions include 33–35 and Gln87; that span reads PMV. Residue Cys116 is the Proton donor of the active site. Residues Lys158, His186, 216–218, and 240–241 contribute to the FMN site; these read NGD and AR.

This sequence belongs to the Dus family. Dus4 subfamily. It depends on FMN as a cofactor.

It catalyses the reaction 5,6-dihydrouridine(20a) in tRNA + NADP(+) = uridine(20a) in tRNA + NADPH + H(+). The enzyme catalyses 5,6-dihydrouridine(20a) in tRNA + NAD(+) = uridine(20a) in tRNA + NADH + H(+). It carries out the reaction 5,6-dihydrouridine(20b) in tRNA + NAD(+) = uridine(20b) in tRNA + NADH + H(+). The catalysed reaction is 5,6-dihydrouridine(20b) in tRNA + NADP(+) = uridine(20b) in tRNA + NADPH + H(+). In terms of biological role, catalyzes the synthesis of dihydrouridine, a modified base found in the D-loop of most tRNAs. This chain is tRNA-dihydrouridine(20a/20b) synthase [NAD(P)+]-like (Dus4l), found in Mus musculus (Mouse).